The sequence spans 327 residues: Aquaporin-1 (327 aa).

The segment at 1–34 is disordered; that stretch reads MSSNDSNDTDKQHTRLDPTGVDDAYIPPEQPETK. Residues 1–48 lie on the Cytoplasmic side of the membrane; it reads MSSNDSNDTDKQHTRLDPTGVDDAYIPPEQPETKHHRFKISKDTLRNH. The chain crosses the membrane as a helical span at residues 49–69; that stretch reads FIAAAGEFCGTFMFLWCAYVI. Over 70–91 the chain is Extracellular; it reads CNVANHDVALVAAPDGSHPGQL. A helical transmembrane segment spans residues 92-112; sequence IMIAIGFGFSVMFSIWCFAGV. At 113-136 the chain is on the cytoplasmic side; sequence SGGALNPAVSLSLCLARAVSPTRC. Residues 118–120 carry the NPA 1 motif; the sequence is NPA. The chain crosses the membrane as a helical span at residues 137–157; that stretch reads VVMWVSQIVAGMAAGGAASAM. Residues 158-176 lie on the Extracellular side of the membrane; the sequence is TPGEVLFANSLGLGCSRTR. Residues 177–197 form a helical membrane-spanning segment; sequence GLFLEMFGTAILCLTVLMTAV. Topologically, residues 198–203 are cytoplasmic; sequence EKRETN. The chain crosses the membrane as a helical span at residues 204–224; it reads FMAALPIGISLFIAHVALTAY. At 225–248 the chain is on the extracellular side; that stretch reads TGTGVNPARSLGAAVAARYFPHYH. The NPA 2 signature appears at 230–232; it reads NPA. A helical transmembrane segment spans residues 249–269; it reads WIYWIGPLLGSILAWSVWQLL. Residues 270–327 are Cytoplasmic-facing; sequence QILDYTTYVTAEKAASTKEKAQKKVKPAVPLLWLKSNFSLLFFISRSLALNVIIFGKN.

It belongs to the MIP/aquaporin (TC 1.A.8) family.

The protein localises to the endoplasmic reticulum membrane. The protein resides in the cell membrane. Its function is as follows. Water channel required to facilitate the transport of water across membranes. Involved in sporulation, freeze tolerance and osmotolerance. Is non-functional in most laboratory strains. This is Aquaporin-1 (AQY1) from Saccharomyces cerevisiae (strain Lalvin EC1118 / Prise de mousse) (Baker's yeast).